The primary structure comprises 250 residues: 5'-nucleotidase SurE (250 aa).

A divalent metal cation-binding residues include Asp-8, Asp-9, Ser-40, and Asn-95.

This sequence belongs to the SurE nucleotidase family. Requires a divalent metal cation as cofactor.

It is found in the cytoplasm. It catalyses the reaction a ribonucleoside 5'-phosphate + H2O = a ribonucleoside + phosphate. Nucleotidase that shows phosphatase activity on nucleoside 5'-monophosphates. The protein is 5'-nucleotidase SurE of Nitratidesulfovibrio vulgaris (strain ATCC 29579 / DSM 644 / CCUG 34227 / NCIMB 8303 / VKM B-1760 / Hildenborough) (Desulfovibrio vulgaris).